The following is a 105-amino-acid chain: MPIVTVTLNNKSFQLYCNNGDEEKVLSLADKLNDKIAEIKLSSPTASFDLLLVMASLNAQAEIAILTEKLYKNGFQNNNHEEEKFAETLTTIASYLENLARKMEK.

This is an uncharacterized protein from Rickettsia prowazekii (strain Madrid E).